A 203-amino-acid polypeptide reads, in one-letter code: Urease accessory protein UreG (203 aa).

14 to 21 (GPVGSGKT) provides a ligand contact to GTP.

The protein belongs to the SIMIBI class G3E GTPase family. UreG subfamily. Homodimer. UreD, UreF and UreG form a complex that acts as a GTP-hydrolysis-dependent molecular chaperone, activating the urease apoprotein by helping to assemble the nickel containing metallocenter of UreC. The UreE protein probably delivers the nickel.

Its subcellular location is the cytoplasm. Facilitates the functional incorporation of the urease nickel metallocenter. This process requires GTP hydrolysis, probably effectuated by UreG. The polypeptide is Urease accessory protein UreG (Allorhizobium ampelinum (strain ATCC BAA-846 / DSM 112012 / S4) (Agrobacterium vitis (strain S4))).